The chain runs to 1035 residues: MSGSYPFIDIAALDSVREGFARGDAQLVLAHDLSTVLWVNGPGAKLFGYNRVEDLIEGQLDLPVATRRQIAAFSSENTSAPSAVAVRLGGGLRSELTHLHVSNIKLPDGVAALLVATQMPDNSAEAAISGLGDDSTHIALVDAVGKVVAASLRFALLDISASTLEDLIVEAGDATDRIVKRRIRTGSHSVPGAIARLTDTPALHLLCIVGDAPAQFQTAAEAVPLPDNAEAVLEEILPEQGDAPAQQAQKTHAEQPRPKTFAFDHDAPPARFIWKVGPDGTFSEISPDLAAVVGPNSADMVGRRFSDVANVFGFDTDGSIAALLLERDTWSGKRLLWPVEGTRLRVPVELAALPVYSRDREFLGFRGFGIVRPAEAEADPEEIGLALAGGIPQNRKPRKEPAETARMVGEDDVLALSEEVANDDQPAAVLPKPPLDITPTPGRRDSDKVISLLNSCAQEKVAADQAKFLKEKERATRPEGGLTKTERNAFREIAERLRKQGLANTRAESETPVSETSSIEPVEPTPPVKTRSEPIQPDETALLANLPVPVIIHSGDAIHYVNQALLDITGYESLDDIRSAGGVDVLFNSESDDGETRQSMVLRHADGSEEPVDAHLNAIAWRGGRALMLSLMPVTAADLPAPAELPAANDEEKQALEAHVEELKTILDTATDGVVLIDPEGRIRSMNHSASALFGYERDEAEGKFFSMLFAIESQRAAMDYLHGLSGNGVLSVLNDGREVIGREAKGGFIPLFMTIGKLPHTRGFCAVLRDITQWKRTEEELTNARKEAERASNQKTEFLARISHEIRTPLNAIIGFSELMADEKFGPIGNDRYRDYLRDINRSGNHVLALVNDLLDISKIEAGALDMQFEAVSLNDAIGEAIALMQPQANRERVIIRSSFQSNLPDIVADSRSIKQVALNLLSNAVRFTAPGRQVIVSTSYELNGDVVMRVRDTGIGMSKSEVEQALKPFRQINALERRKAESAKDWRNEGTGLGLPLTKAMVEANRAQFAIDSNPGQGTVVEIVFPPTRVLAD.

The interval 1–613 (MSGSYPFIDI…HADGSEEPVD (613 aa)) is important for polar localization. The interval 500–533 (QGLANTRAESETPVSETSSIEPVEPTPPVKTRSE) is disordered. The segment at 614–1035 (AHLNAIAWRG…VFPPTRVLAD (422 aa)) is interaction with DivK. The PAS domain occupies 659-730 (HVEELKTILD…YLHGLSGNGV (72 aa)). The region spanning 802-1031 (RISHEIRTPL…VVEIVFPPTR (230 aa)) is the Histidine kinase domain. H805 bears the Phosphohistidine; by autocatalysis mark.

In terms of assembly, interacts with DivK.

The protein localises to the cytoplasm. The catalysed reaction is ATP + protein L-histidine = ADP + protein N-phospho-L-histidine.. Its function is as follows. Functions as a polar differentiation marker. Essential protein that, by localizing in the old pole of dividing cells, controls cell division and maturation, probably through control of DivK phosphorylation status and cellular distribution, which in turn regulates CtrA, a transcriptional regulator of the minB operon. The asymmetrical localization of this protein is probably required for cells to enter a new division cycle. In Brucella ovis (strain ATCC 25840 / 63/290 / NCTC 10512), this protein is Cell-division control histidine kinase PdhS (pdhS).